Consider the following 464-residue polypeptide: UDP-glycosyltransferase 76C1 (464 aa).

UDP-alpha-D-glucose contacts are provided by residues S279, 338–340, 355–363, and 377–380; these read APQ, HNGWNSTLE, and KWDQ.

The protein belongs to the UDP-glycosyltransferase family.

Inhibited by olomoucine and 3-isobutyl-1-methylxanthine. In terms of biological role, involved in the N-glucosylation of cytokinins. Catalyzes the formation of both the 7-N and the 9-N-glucosides. The polypeptide is UDP-glycosyltransferase 76C1 (UGT76C1) (Arabidopsis thaliana (Mouse-ear cress)).